A 215-amino-acid polypeptide reads, in one-letter code: Protein LURP-one-related 4 (215 aa).

This sequence belongs to the LOR family.

Functionally, might be related to the phospholipid scramblase and tubby-like superfamily of membrane tethered transcription factors. This Arabidopsis thaliana (Mouse-ear cress) protein is Protein LURP-one-related 4.